Reading from the N-terminus, the 122-residue chain is Large ribosomal subunit protein uL14c (122 aa).

Belongs to the universal ribosomal protein uL14 family. In terms of assembly, part of the 50S ribosomal subunit.

It is found in the plastid. Its subcellular location is the chloroplast. Binds to 23S rRNA. The polypeptide is Large ribosomal subunit protein uL14c (rpl14) (Bigelowiella natans (Pedinomonas minutissima)).